Consider the following 201-residue polypeptide: MSRYRGPRFKKIRRLGALPGLTSKRPRAGSDLRNQSRSGKRSQYRIRLEEKQKLRFHYGLTERQLLNYVRIAGKAKGATGRVLLQLLEMRLDNILFRLGMASTIPGARQLVNHRHILVNGRIVDIPSYRCKPRDIITAGNEQKSRALIQNVFDSSSHEELPKHLTLHPFQFKGLVNQIIDSNWVGLKINELLVVEYYSRQT.

The tract at residues 20–43 (GLTSKRPRAGSDLRNQSRSGKRSQ) is disordered. The S4 RNA-binding domain maps to 89–149 (MRLDNILFRL…NEQKSRALIQ (61 aa)).

Belongs to the universal ribosomal protein uS4 family. In terms of assembly, part of the 30S ribosomal subunit. Contacts protein S5. The interaction surface between S4 and S5 is involved in control of translational fidelity.

The protein localises to the plastid. It is found in the chloroplast. Functionally, one of the primary rRNA binding proteins, it binds directly to 16S rRNA where it nucleates assembly of the body of the 30S subunit. In terms of biological role, with S5 and S12 plays an important role in translational accuracy. The chain is Small ribosomal subunit protein uS4c (rps4) from Vitis vinifera (Grape).